The following is a 29-amino-acid chain: Cytochrome b6-f complex subunit 8 (29 aa).

A helical membrane pass occupies residues 3–23; sequence IVGIAWAALMVVFTFSLSLVV.

It belongs to the PetN family. In terms of assembly, the 4 large subunits of the cytochrome b6-f complex are cytochrome b6, subunit IV (17 kDa polypeptide, PetD), cytochrome f and the Rieske protein, while the 4 small subunits are PetG, PetL, PetM and PetN. The complex functions as a dimer.

The protein localises to the plastid. Its subcellular location is the chloroplast thylakoid membrane. Component of the cytochrome b6-f complex, which mediates electron transfer between photosystem II (PSII) and photosystem I (PSI), cyclic electron flow around PSI, and state transitions. The polypeptide is Cytochrome b6-f complex subunit 8 (Cryptomeria japonica (Japanese cedar)).